Reading from the N-terminus, the 260-residue chain is tRNA pseudouridine synthase A (260 aa).

Asp52 acts as the Nucleophile in catalysis. Tyr110 is a binding site for substrate.

Belongs to the tRNA pseudouridine synthase TruA family. As to quaternary structure, homodimer.

The catalysed reaction is uridine(38/39/40) in tRNA = pseudouridine(38/39/40) in tRNA. In terms of biological role, formation of pseudouridine at positions 38, 39 and 40 in the anticodon stem and loop of transfer RNAs. This Spiroplasma kunkelii protein is tRNA pseudouridine synthase A.